The chain runs to 271 residues: Hachiman protein HamA (271 aa).

In terms of biological role, component of antiviral defense system Hachiman, composed of HamA and HamB. Expression of Hachiman in B.subtilis (strain BEST7003) confers resistance to phages phi105, phi29, phi3T, rho14, SBSphiJ, SpBeta and SPR. The sequence is that of Hachiman protein HamA from Bacillus cereus.